A 462-amino-acid chain; its full sequence is MTLFARIPKVDKILEWDGTKVLLGIHPRPTVLNAVRSVLDSLRTAARSGFLKEEELLEGAVASRIEREVARSTAFSLRRVVNGTGVVIHTNLGRSPLSKRVKPLLDEIAFGYSNLEFDLEKGERGSRYSHVERLLCDLTGAEAALVVNNNAAAVLLALSALAAGKEVVVSRGELVEIGGSFRIPDVMGQGGAILREVGTTNRTHPRDYHQAVSEQTALLLKVHSSNFAVVGFTAEVSATELVAIGKEHSVPVMADIGSGCLLDLSPFGIRGEPTVQEFVKAGVDVITFSGDKLLGGPQAGIIVGRREFIAPLTQHPLLRALRIDKLTLAALEGTLRLYRDERLALAEIPTLRMLTASAAELATRARSFARRIRRASPPDIRLTLTSGISQVGGGAYPLLELPTTLMAMEADGISPQEMEIRLRGMEVPVTGRIHRGRFLLDVRTLQDDDIPFIAAALSSLAD.

Lys292 carries the N6-(pyridoxal phosphate)lysine modification.

It belongs to the SelA family. Pyridoxal 5'-phosphate is required as a cofactor.

It is found in the cytoplasm. It catalyses the reaction L-seryl-tRNA(Sec) + selenophosphate + H(+) = L-selenocysteinyl-tRNA(Sec) + phosphate. It functions in the pathway aminoacyl-tRNA biosynthesis; selenocysteinyl-tRNA(Sec) biosynthesis; selenocysteinyl-tRNA(Sec) from L-seryl-tRNA(Sec) (bacterial route): step 1/1. In terms of biological role, converts seryl-tRNA(Sec) to selenocysteinyl-tRNA(Sec) required for selenoprotein biosynthesis. This is L-seryl-tRNA(Sec) selenium transferase from Geobacter metallireducens (strain ATCC 53774 / DSM 7210 / GS-15).